We begin with the raw amino-acid sequence, 110 residues long: Spermatid nuclear transition protein 3 (110 aa).

The disordered stretch occupies residues 80-110 (RSCAREKLNQSRKRYQNMRQSQRRGQNQKRR).

Its subcellular location is the nucleus. The protein localises to the chromosome. Involved in nuclear basic protein transition: histones are replaced by spermatid specific proteins which are themselves replaced by protamines in late spermatids. This chain is Spermatid nuclear transition protein 3, found in Ovis aries (Sheep).